The following is an 81-amino-acid chain: Exodeoxyribonuclease 7 small subunit (81 aa).

This sequence belongs to the XseB family. As to quaternary structure, heterooligomer composed of large and small subunits.

Its subcellular location is the cytoplasm. It catalyses the reaction Exonucleolytic cleavage in either 5'- to 3'- or 3'- to 5'-direction to yield nucleoside 5'-phosphates.. Functionally, bidirectionally degrades single-stranded DNA into large acid-insoluble oligonucleotides, which are then degraded further into small acid-soluble oligonucleotides. The protein is Exodeoxyribonuclease 7 small subunit of Rhodopseudomonas palustris (strain BisA53).